We begin with the raw amino-acid sequence, 35 residues long: Photosystem II reaction center protein T (35 aa).

Residues 3-23 traverse the membrane as a helical segment; it reads ALVYTFLLVSTLGIIFFAIFF.

Belongs to the PsbT family. In terms of assembly, PSII is composed of 1 copy each of membrane proteins PsbA, PsbB, PsbC, PsbD, PsbE, PsbF, PsbH, PsbI, PsbJ, PsbK, PsbL, PsbM, PsbT, PsbY, PsbZ, Psb30/Ycf12, at least 3 peripheral proteins of the oxygen-evolving complex and a large number of cofactors. It forms dimeric complexes.

It localises to the plastid. It is found in the chloroplast thylakoid membrane. Functionally, found at the monomer-monomer interface of the photosystem II (PS II) dimer, plays a role in assembly and dimerization of PSII. PSII is a light-driven water plastoquinone oxidoreductase, using light energy to abstract electrons from H(2)O, generating a proton gradient subsequently used for ATP formation. This Drimys granadensis protein is Photosystem II reaction center protein T.